The primary structure comprises 347 residues: Protein RecA (347 aa).

ATP is bound at residue 67–74; sequence GPESSGKT. The tract at residues 326–347 is disordered; sequence DKLLPGRAPSSEAQGTESGQEA. The span at 336-347 shows a compositional bias: polar residues; sequence SEAQGTESGQEA.

The protein belongs to the RecA family.

Its subcellular location is the cytoplasm. In terms of biological role, can catalyze the hydrolysis of ATP in the presence of single-stranded DNA, the ATP-dependent uptake of single-stranded DNA by duplex DNA, and the ATP-dependent hybridization of homologous single-stranded DNAs. It interacts with LexA causing its activation and leading to its autocatalytic cleavage. This chain is Protein RecA, found in Alkalilimnicola ehrlichii (strain ATCC BAA-1101 / DSM 17681 / MLHE-1).